The sequence spans 293 residues: Ribosomal protein L11 methyltransferase (293 aa).

S-adenosyl-L-methionine-binding residues include Thr145, Gly166, Asp188, and Asn230.

This sequence belongs to the methyltransferase superfamily. PrmA family.

Its subcellular location is the cytoplasm. It catalyses the reaction L-lysyl-[protein] + 3 S-adenosyl-L-methionine = N(6),N(6),N(6)-trimethyl-L-lysyl-[protein] + 3 S-adenosyl-L-homocysteine + 3 H(+). Its function is as follows. Methylates ribosomal protein L11. The protein is Ribosomal protein L11 methyltransferase of Actinobacillus succinogenes (strain ATCC 55618 / DSM 22257 / CCUG 43843 / 130Z).